The following is a 68-amino-acid chain: Large ribosomal subunit protein bL35 (68 aa).

It belongs to the bacterial ribosomal protein bL35 family.

The polypeptide is Large ribosomal subunit protein bL35 (Orientia tsutsugamushi (strain Ikeda) (Rickettsia tsutsugamushi)).